The sequence spans 357 residues: Probable cinnamyl alcohol dehydrogenase 2 (357 aa).

Cysteine 47 is a binding site for Zn(2+). Serine 49 provides a ligand contact to NADP(+). Histidine 69, glutamate 70, cysteine 100, cysteine 103, cysteine 106, cysteine 114, and cysteine 163 together coordinate Zn(2+). NADP(+)-binding positions include threonine 167, 188–193, 211–216, threonine 251, glycine 275, and 298–300; these read GLGGVG, SSSNKK, and SFI.

Belongs to the zinc-containing alcohol dehydrogenase family. As to quaternary structure, homodimer. The cofactor is Zn(2+). The N-terminus is blocked.

It carries out the reaction (E)-cinnamyl alcohol + NADP(+) = (E)-cinnamaldehyde + NADPH + H(+). The catalysed reaction is (E)-coniferol + NADP(+) = (E)-coniferaldehyde + NADPH + H(+). It catalyses the reaction (E)-sinapyl alcohol + NADP(+) = (E)-sinapaldehyde + NADPH + H(+). The enzyme catalyses (E)-4-coumaroyl alcohol + NADP(+) = (E)-4-coumaraldehyde + NADPH + H(+). It carries out the reaction (E)-caffeyl alcohol + NADP(+) = (E)-caffeyl aldehyde + NADPH + H(+). It participates in aromatic compound metabolism; phenylpropanoid biosynthesis. Involved in lignin biosynthesis. Catalyzes the final step specific for the production of lignin monomers. Catalyzes the NADPH-dependent reduction of coniferaldehyde, 5-hydroxyconiferaldehyde, sinapaldehyde, 4-coumaraldehyde and caffeyl aldehyde to their respective alcohols. This is Probable cinnamyl alcohol dehydrogenase 2 (CAD19) from Nicotiana tabacum (Common tobacco).